The chain runs to 314 residues: Ribosomal protein L11 methyltransferase (314 aa).

The S-adenosyl-L-methionine site is built by T161, G182, D204, and N248.

The protein belongs to the methyltransferase superfamily. PrmA family.

It is found in the cytoplasm. The enzyme catalyses L-lysyl-[protein] + 3 S-adenosyl-L-methionine = N(6),N(6),N(6)-trimethyl-L-lysyl-[protein] + 3 S-adenosyl-L-homocysteine + 3 H(+). In terms of biological role, methylates ribosomal protein L11. This Listeria innocua serovar 6a (strain ATCC BAA-680 / CLIP 11262) protein is Ribosomal protein L11 methyltransferase.